The chain runs to 263 residues: Lens fiber major intrinsic protein (263 aa).

At 1 to 9 (MWELRSASF) the chain is on the cytoplasmic side. A helical transmembrane segment spans residues 10 to 29 (WRAIFAEFFATLFYVFFGLG). At 30-41 (SSLRWAPGPLHV) the chain is on the extracellular side. A helical membrane pass occupies residues 42 to 59 (LQVAMAFGLALATLVQSV). Residues 60–61 (GH) lie on the Cytoplasmic side of the membrane. The discontinuously helical intramembrane region spans 62 to 77 (ISGAHVNPAVTFAFLV). An NPA 1 motif is present at residues 68–70 (NPA). Residues 78 to 82 (GSQMS) lie on the Cytoplasmic side of the membrane. The helical transmembrane segment at 83 to 106 (LLRAFCYMAAQLLGAVAGAAVLYS) threads the bilayer. Topologically, residues 107 to 127 (VTPPAVRGNLALNTLHPAVSV) are extracellular. The chain crosses the membrane as a helical span at residues 128 to 148 (GQATTVEIFLTLQFVLCIFAT). The Cytoplasmic portion of the chain corresponds to 149–156 (YDERRNGQ). Residues 157-175 (LGSVALAVGFSLALGHLFG) traverse the membrane as a helical segment. The Extracellular segment spans residues 176 to 178 (MYY). Positions 179-193 (TGAGMNPARSFAPAI) form an intramembrane region, discontinuously helical. The NPA 2 signature appears at 184–186 (NPA). At 194-200 (LTGNFTN) the chain is on the extracellular side. A helical membrane pass occupies residues 201 to 222 (HWVYWVGPIIGGGLGSLLYDFL). Residues 223-263 (LFPRLKSISERLSVLKGAKPDVSNGQPEVTGEPVELNTQAL) are Cytoplasmic-facing. Positions 227-237 (LKSISERLSVL) are interaction with CALM. 2 positions are modified to phosphoserine: Ser235 and Ser245. 2 positions are modified to deamidated asparagine; by deterioration: Asn246 and Asn259.

Belongs to the MIP/aquaporin (TC 1.A.8) family. As to quaternary structure, homotetramer; each monomer provides an independent water pore. Two homotetramers on opposing membranes can dimerize, forming a cell-cell junction. Interacts with CALM; the calcium-calmodulin/CALM complex interacts with the cytoplasmic domains of two aquaporins, leading to channel closure. Interacts with BFSP1 (via C-terminus); prevents calcium-dependent inhibition of the water channel activity. Subject to partial proteolytic cleavage in the eye lens core. Partial proteolysis promotes interactions between tetramers from adjoining membranes. In terms of processing, fatty acylated at Met-1 and Lys-238. The acyl modifications, in decreasing order of ion abundance, are: oleoyl (C18:1) &gt; palmitoyl (C16:0) &gt; stearoyl (C18:0) &gt; eicosenoyl (C20:1) &gt; dihomo-gamma-linolenoyl (C20:3) &gt; palmitoleoyl (C16:1) &gt; eicosadienoyl (C20:2). In terms of tissue distribution, expressed in the cortex and nucleus of the retina lens (at protein level). Major component of lens fiber gap junctions.

Its subcellular location is the cell membrane. The protein localises to the cell junction. It catalyses the reaction H2O(in) = H2O(out). The water channel activity is inhibited by calcium through calmodulin/CALM. Functionally, aquaporins form homotetrameric transmembrane channels, with each monomer independently mediating water transport across the plasma membrane along its osmotic gradient. Specifically expressed in lens fiber cells, this aquaporin is crucial for maintaining lens water homeostasis and transparency. Beyond water permeability, it also acts as a cell-to-cell adhesion molecule, forming thin junctions between lens fiber cells that are essential for maintaining the ordered structure and transparency of the lens. This Homo sapiens (Human) protein is Lens fiber major intrinsic protein.